A 313-amino-acid polypeptide reads, in one-letter code: Dehydrodolichyl diphosphate synthase CPT5, chloroplastic (313 aa).

The transit peptide at 1 to 42 (MAFSFQLQQVFPFPVKFCSQPKSIKLQIFPNLTKRLPIHPLA) directs the protein to the chloroplast. Asp-89 is a catalytic residue.

Belongs to the UPP synthase family. Mg(2+) is required as a cofactor. Expressed in leaf trichomes, stem trichomes and old leaves. Expressed at low levels in young leaves and flowers.

Its subcellular location is the plastid. The protein localises to the chloroplast. It carries out the reaction n isopentenyl diphosphate + (2E,6E)-farnesyl diphosphate = a di-trans,poly-cis-polyprenyl diphosphate + n diphosphate. Functionally, catalyzes cis-prenyl chain elongation to produce the polyprenyl backbone of dolichol, a glycosyl carrier-lipid required for the biosynthesis of several classes of glycoprotein. This Solanum lycopersicum (Tomato) protein is Dehydrodolichyl diphosphate synthase CPT5, chloroplastic.